The chain runs to 201 residues: Large ribosomal subunit protein uL4 (201 aa).

The tract at residues 46–71 (QKTRAEITGSGKKPWRQKGTGRARSG) is disordered.

The protein belongs to the universal ribosomal protein uL4 family. Part of the 50S ribosomal subunit.

One of the primary rRNA binding proteins, this protein initially binds near the 5'-end of the 23S rRNA. It is important during the early stages of 50S assembly. It makes multiple contacts with different domains of the 23S rRNA in the assembled 50S subunit and ribosome. Functionally, forms part of the polypeptide exit tunnel. The chain is Large ribosomal subunit protein uL4 from Klebsiella pneumoniae (strain 342).